The sequence spans 380 residues: Cytochrome b (380 aa).

The next 4 membrane-spanning stretches (helical) occupy residues 34–54, 78–99, 114–134, and 179–199; these read FGSLLGLCLIAQIATGLFLAM, WLLRNLHANGASFFFICIYFHI, WNIGVILLFLLMATAFVGYVL, and FFTFHFILPFIITAVSLIHLL. H84 and H98 together coordinate heme b. Positions 183 and 197 each coordinate heme b. H202 provides a ligand contact to a ubiquinone. Helical transmembrane passes span 227-247, 289-309, 321-341, and 348-368; these read YKDLLGFVIMLGALASLSTFA, LGGVLAVVLSIMVLFLMPIIH, IAKTFFWALIANTAILTWIGG, and FITIGQIASGLYFLIFVLLIP.

The protein belongs to the cytochrome b family. In terms of assembly, the cytochrome bc1 complex contains 3 respiratory subunits (MT-CYB, CYC1 and UQCRFS1), 2 core proteins (UQCRC1 and UQCRC2) and probably 6 low-molecular weight proteins. The cofactor is heme b.

The protein resides in the mitochondrion inner membrane. In terms of biological role, component of the ubiquinol-cytochrome c reductase complex (complex III or cytochrome b-c1 complex) that is part of the mitochondrial respiratory chain. The b-c1 complex mediates electron transfer from ubiquinol to cytochrome c. Contributes to the generation of a proton gradient across the mitochondrial membrane that is then used for ATP synthesis. This Rana amurensis (Siberian wood frog) protein is Cytochrome b (mt-cyb).